Reading from the N-terminus, the 818-residue chain is FAD-dependent monooxygenase anuJ (818 aa).

The FAD site is built by Glu46, Ala60, Arg122, Asp329, and Gly342. A run of 3 helical transmembrane segments spans residues 471 to 491 (VLWA…MFSV), 539 to 559 (FFYQ…IMLV), and 571 to 591 (LSFA…FVPI). A glycan (N-linked (GlcNAc...) asparagine) is linked at Asn614. The next 2 helical transmembrane spans lie at 621–641 (ILPV…LSPV) and 647–667 (AAGF…AGLA). N-linked (GlcNAc...) asparagine glycosylation occurs at Asn683. 2 consecutive transmembrane segments (helical) span residues 743–763 (WDQV…FADL) and 778–798 (FSAL…LMWL).

This sequence belongs to the paxM FAD-dependent monooxygenase family.

Its subcellular location is the membrane. Functionally, highly reducing polyketide synthase; part of the gene cluster that mediates the biosynthesis of annullatin D, an alkylated aromatic polyketide with a fused dihydrobenzofuran lactone ring system that exhibits potent agonistic activities toward the cannabinoid receptors. AnuJ does not seem to play a role within the pathway. The annullatin backbone 2-hydroxymethyl-3-pentylphenol is assembled from one acetyl-CoA starter unit and 5 malonyl-CoA elongation units by cooperation of the highly reducing polyketide synthase anuA, the short-chain dehydrogenase anuB and the oxidoreductase anuC, before being hydroxylated at the C-5 alkyl chain by the cytochrome P450 monooxygenase anuE to form (8S)-annullatin E. The prenyltransferase anuH subsequently installs one isoprenyl group at the benzene ring to form (8S)-annullatin J. Enzymatic or nonenzymatic dihydro-benzofuran ring formation between the prenyl and the phenolic hydroxyl groups in (8S)-annullatin J results in two diastereomers (2S,9S)-annullatin H and compound 12. The intermediate (2S,9S)-annullatin H is then converted to (2S,9S)-annullatin D by the FAD-linked oxidoreductase anuG-catalyzed five-member lactone ring formation. The isomer 12 acts as a substrate for the short-chain dehydrogenase anuF and is oxidized to (2R)-annullatin F, which is subsequently acetylated by an acetyltransferase leading to (2R)-annullatin G formation. The remaining enzymes identified within the cluster, anuD, anuI and anuJ, seem not to be involved in annullatin biosynthesis. This Penicillium roqueforti (strain FM164) protein is FAD-dependent monooxygenase anuJ.